The following is a 452-amino-acid chain: Glycine receptor subunit alpha-2 (452 aa).

Residues methionine 1–cysteine 27 form the signal peptide. Topologically, residues lysine 28–tyrosine 256 are extracellular. Asparagine 72 carries N-linked (GlcNAc...) asparagine glycosylation. A glycine-binding site is contributed by arginine 99. Residue arginine 99 participates in strychnine binding. Asparagine 103 carries N-linked (GlcNAc...) asparagine glycosylation. Serine 163 contributes to the glycine binding site. Cysteine 172 and cysteine 186 are joined by a disulfide. Residues glutamate 226 and glutamate 228 each coordinate Zn(2+). An intrachain disulfide couples cysteine 232 to cysteine 243. Threonine 238 contacts glycine. Residue histidine 249 coordinates Zn(2+). A helical transmembrane segment spans residues tyrosine 257–isoleucine 278. The Cytoplasmic portion of the chain corresponds to asparagine 279–alanine 283. The chain crosses the membrane as a helical span at residues proline 284 to serine 304. The Extracellular portion of the chain corresponds to arginine 305–lysine 315. Residues alanine 316–alanine 336 traverse the membrane as a helical segment. The Cytoplasmic segment spans residues alanine 337–threonine 420. A helical membrane pass occupies residues isoleucine 421 to tyrosine 441. Over lysine 442–lysine 452 the chain is Extracellular.

It belongs to the ligand-gated ion channel (TC 1.A.9) family. Glycine receptor (TC 1.A.9.3) subfamily. GLRA2 sub-subfamily. As to quaternary structure, interacts with GLRB. Heteropentamer composed of GLRA2 and GLRB; functional GLRB-GLRA2 heteropentamers contain four GLRA2 subunits and one GLRB subunit, although alternative subunit composition cannot be excluded. Homopentamer (in vitro). Both homopentamers and heteropentamers form functional ion channels, but their characteristics are subtly different. Detected in the retina inner plexiform layer (at protein level). Detected in neonate retina. Detected in brain. Detected in spinal cord, with higher levels in the dorsal horn.

It localises to the postsynaptic cell membrane. The protein localises to the synapse. It is found in the cell membrane. Its subcellular location is the cell projection. The enzyme catalyses chloride(in) = chloride(out). Its activity is regulated as follows. Channel opening is triggered by extracellular glycine. Channel opening is also triggered by taurine and beta-alanine. Inhibited by strychnine. Inhibited by picrotoxin. Functionally, subunit of heteromeric glycine-gated chloride channels. Plays a role in synaptic plasticity. Contributes to the generation of inhibitory postsynaptic currents, and is involved in the down-regulation of neuronal excitability. Plays a role in cellular responses to ethanol. In Mus musculus (Mouse), this protein is Glycine receptor subunit alpha-2.